A 163-amino-acid polypeptide reads, in one-letter code: GTP-dependent dephospho-CoA kinase (163 aa).

Aspartate 38, valine 39, aspartate 57, glutamate 115, and aspartate 138 together coordinate GTP.

The protein belongs to the GTP-dependent DPCK family.

The catalysed reaction is 3'-dephospho-CoA + GTP = GDP + CoA + H(+). It functions in the pathway cofactor biosynthesis; coenzyme A biosynthesis. In terms of biological role, catalyzes the GTP-dependent phosphorylation of the 3'-hydroxyl group of dephosphocoenzyme A to form coenzyme A (CoA). The chain is GTP-dependent dephospho-CoA kinase from Methanothermobacter thermautotrophicus (strain ATCC 29096 / DSM 1053 / JCM 10044 / NBRC 100330 / Delta H) (Methanobacterium thermoautotrophicum).